The sequence spans 348 residues: D-lactate dehydrogenase kk1H (348 aa).

Residues 158–159, aspartate 178, 208–209, 235–237, and aspartate 261 contribute to the NAD(+) site; these read RI, CP, and TSR. The active site involves arginine 237. Glutamate 266 is a catalytic residue. Residue histidine 298 is the Proton donor of the active site.

Belongs to the D-isomer specific 2-hydroxyacid dehydrogenase family.

It participates in secondary metabolite biosynthesis. Its function is as follows. D-lactate dehydrogenase; part of the gene cluster that mediates the biosynthesis of KK-1, a novel cyclic depsipeptide with 10 residues which is a promising active compound with high activity against many plant pathogens, especially Botrytis cinerea. Within the pathway, kk1H catalyzes in the synthesis of D-lactic acid from pyruvic acid, which is recognized by the A domain of the first kk1B module. The nonribosomal peptide synthetase (NRPS) kk1B catalyzes the elongation and cyclization of the decapeptide chain composed of 1 D-lactic acid residue (D-Lac), 1 pipecolic acid residue (Pip), 1 aspartic acid residue (Asp), 1 isoleucine residue (Ile), 1 glycine residue (Gly), 1 tyrosine residue (Tyr) and 4 valine residues (Val). The Asp, Ile and 3 Val residues are N-methylated by the 5 methyltransferase domains from the NRPS (found in modules 3, 5, 6, 7 and 9), whereas the Tyr residue is O-methylated by the cluster encoded O-methyltransferase kk1A. The thioesterase kk1J is likely to be involved in the corrective mechanism of peptide chain synthesis. The D-lactate dehydrogenase kk1H is involved in the synthesis of D-lactic acid from pyruvic acid, which is recognized by the A domain of the first kk1B module. The pyrroline-5-carboxylate reductase kk1I is involved in the synthesis of the L-pipecolic acid residue of KK-1 from delta-1-pyrroline-5-carboxylate (P5C), a metabolic intermediate of lysine. It still is unclear how kk1C and kk1D are involved in the production of KK-1. This chain is D-lactate dehydrogenase kk1H, found in Curvularia clavata.